The following is a 399-amino-acid chain: L-asparaginase-like protein GG20738 (399 aa).

Positions 1-22 (MLAQSCCLRLLILLLLCKSTCS) are cleaved as a signal peptide. Disulfide bonds link cysteine 90–cysteine 95, cysteine 189–cysteine 205, and cysteine 344–cysteine 371.

Belongs to the Ntn-hydrolase family.

This is L-asparaginase-like protein GG20738 from Drosophila erecta (Fruit fly).